The primary structure comprises 277 residues: Large ribosomal subunit protein uL2 (277 aa).

Residues 222 to 277 (GVAMNPVDHPHGGGEGRTSGGRHPVTPWGKPTKGKKTRSNKATDKFIMRSRHQRKK) form a disordered region.

Belongs to the universal ribosomal protein uL2 family. In terms of assembly, part of the 50S ribosomal subunit. Forms a bridge to the 30S subunit in the 70S ribosome.

Functionally, one of the primary rRNA binding proteins. Required for association of the 30S and 50S subunits to form the 70S ribosome, for tRNA binding and peptide bond formation. It has been suggested to have peptidyltransferase activity; this is somewhat controversial. Makes several contacts with the 16S rRNA in the 70S ribosome. The chain is Large ribosomal subunit protein uL2 from Brucella canis (strain ATCC 23365 / NCTC 10854 / RM-666).